A 510-amino-acid polypeptide reads, in one-letter code: Cytochrome P450 monooxygenase AFLA_114810 (510 aa).

The N-terminal stretch at 1-17 (MLILLGLLCLYTGLYVA) is a signal peptide. Cys444 lines the heme pocket.

This sequence belongs to the cytochrome P450 family. Requires heme as cofactor.

Its pathway is secondary metabolite biosynthesis. Cytochrome P450 monooxygenase; part of the gene cluster 41 that mediates the biosynthesis of an extracellular and diffusible metabolite that is able to stimulate colony sclerotial production. The protein is Cytochrome P450 monooxygenase AFLA_114810 of Aspergillus flavus (strain ATCC 200026 / FGSC A1120 / IAM 13836 / NRRL 3357 / JCM 12722 / SRRC 167).